The chain runs to 124 residues: Large ribosomal subunit protein bL12 (124 aa).

The protein belongs to the bacterial ribosomal protein bL12 family. Homodimer. Part of the ribosomal stalk of the 50S ribosomal subunit. Forms a multimeric L10(L12)X complex, where L10 forms an elongated spine to which 2 to 4 L12 dimers bind in a sequential fashion. Binds GTP-bound translation factors.

Forms part of the ribosomal stalk which helps the ribosome interact with GTP-bound translation factors. Is thus essential for accurate translation. This Phocaeicola vulgatus (strain ATCC 8482 / DSM 1447 / JCM 5826 / CCUG 4940 / NBRC 14291 / NCTC 11154) (Bacteroides vulgatus) protein is Large ribosomal subunit protein bL12.